A 427-amino-acid chain; its full sequence is Adenylosuccinate synthetase (427 aa).

Residues 12-18 and 40-42 contribute to the GTP site; these read GDEGKGK and GHT. Aspartate 13 serves as the catalytic Proton acceptor. Aspartate 13 and glycine 40 together coordinate Mg(2+). Residues 13-16, 38-41, threonine 128, arginine 142, glutamine 223, threonine 238, and arginine 302 contribute to the IMP site; these read DEGK and NAGH. The Proton donor role is filled by histidine 41. Position 298–304 (298–304) interacts with substrate; it reads VTTGRAR. GTP-binding positions include arginine 304, 330–332, and 412–414; these read KLD and GVG.

It belongs to the adenylosuccinate synthetase family. In terms of assembly, homodimer. Requires Mg(2+) as cofactor.

It localises to the cytoplasm. It catalyses the reaction IMP + L-aspartate + GTP = N(6)-(1,2-dicarboxyethyl)-AMP + GDP + phosphate + 2 H(+). Its pathway is purine metabolism; AMP biosynthesis via de novo pathway; AMP from IMP: step 1/2. Its function is as follows. Plays an important role in the de novo pathway of purine nucleotide biosynthesis. Catalyzes the first committed step in the biosynthesis of AMP from IMP. In Parafrankia sp. (strain EAN1pec), this protein is Adenylosuccinate synthetase.